Consider the following 327-residue polypeptide: Ketol-acid reductoisomerase (NADP(+)) (327 aa).

The KARI N-terminal Rossmann domain occupies alanine 2–threonine 182. NADP(+) is bound by residues tyrosine 25–glutamine 28, arginine 48, serine 53, and aspartate 83–glutamine 86. Residue histidine 108 is part of the active site. Residue glycine 134 participates in NADP(+) binding. Residues threonine 183–glycine 327 enclose the KARI C-terminal knotted domain. Residues aspartate 191, glutamate 195, glutamate 227, and glutamate 231 each contribute to the Mg(2+) site. Serine 252 lines the substrate pocket.

The protein belongs to the ketol-acid reductoisomerase family. Mg(2+) is required as a cofactor.

The enzyme catalyses (2R)-2,3-dihydroxy-3-methylbutanoate + NADP(+) = (2S)-2-acetolactate + NADPH + H(+). The catalysed reaction is (2R,3R)-2,3-dihydroxy-3-methylpentanoate + NADP(+) = (S)-2-ethyl-2-hydroxy-3-oxobutanoate + NADPH + H(+). The protein operates within amino-acid biosynthesis; L-isoleucine biosynthesis; L-isoleucine from 2-oxobutanoate: step 2/4. Its pathway is amino-acid biosynthesis; L-valine biosynthesis; L-valine from pyruvate: step 2/4. Its function is as follows. Involved in the biosynthesis of branched-chain amino acids (BCAA). Catalyzes an alkyl-migration followed by a ketol-acid reduction of (S)-2-acetolactate (S2AL) to yield (R)-2,3-dihydroxy-isovalerate. In the isomerase reaction, S2AL is rearranged via a Mg-dependent methyl migration to produce 3-hydroxy-3-methyl-2-ketobutyrate (HMKB). In the reductase reaction, this 2-ketoacid undergoes a metal-dependent reduction by NADPH to yield (R)-2,3-dihydroxy-isovalerate. The sequence is that of Ketol-acid reductoisomerase (NADP(+)) from Pyrobaculum neutrophilum (strain DSM 2338 / JCM 9278 / NBRC 100436 / V24Sta) (Thermoproteus neutrophilus).